The sequence spans 458 residues: Protein TESPA1 (458 aa).

Residue serine 312 is modified to Phosphoserine. A compositionally biased stretch (basic and acidic residues) spans 328–339 (KIQQDPEHRQAL). 2 disordered regions span residues 328-356 (KIQQ…STSS) and 439-458 (LPTI…LTNL). Polar residues-rich tracts occupy residues 346-356 (PIQNTNPSTSS) and 439-450 (LPTIQQKQNQGQ).

In terms of assembly, interacts with PLCG1 and GRB2; the association is increased with prolonged stimulation of the TCR and may facilitate the assembly of the LAT signalosome. Interacts with ITPR1 and ITPR3. Interacts with HSPA9. Post-translationally, may be phosphorylated in response to store-operated Ca(+2) entry. In terms of tissue distribution, expressed in lymphoid tissues, with highest expression levels detected in thymus and lower levels in spleen and lymph nodes (at protein level). Detected in CD4(+) and CD8(+) T-cells, B-cells and mast cells. Not detected in monocytes/macrophages.

It localises to the cytoplasm. The protein resides in the endoplasmic reticulum membrane. In terms of biological role, may play a role in the regulation of inositol 1,4,5-trisphosphate receptor-mediated Ca(2+) release and mitochondrial Ca(2+) uptake via the mitochondria-associated endoplasmic reticulum membrane (MAM) compartment. Required for the development and maturation of T-cells, its function being essential for the late stages of thymocyte development. Plays a role in T-cell antigen receptor (TCR)-mediated activation of the ERK and NFAT signaling pathways, possibly by serving as a scaffolding protein that promotes the assembly of the LAT signalosome in thymocytes. This is Protein TESPA1 (Tespa1) from Mus musculus (Mouse).